Consider the following 365-residue polypeptide: tRNA-specific 2-thiouridylase MnmA (365 aa).

ATP-binding positions include 6–13 (AMSGGVDS) and L32. Catalysis depends on C101, which acts as the Nucleophile. A disulfide bridge links C101 with C199. Residue G125 coordinates ATP. Residues 149-151 (KDQ) are interaction with tRNA. C199 serves as the catalytic Cysteine persulfide intermediate.

The protein belongs to the MnmA/TRMU family.

The protein localises to the cytoplasm. It carries out the reaction S-sulfanyl-L-cysteinyl-[protein] + uridine(34) in tRNA + AH2 + ATP = 2-thiouridine(34) in tRNA + L-cysteinyl-[protein] + A + AMP + diphosphate + H(+). Its function is as follows. Catalyzes the 2-thiolation of uridine at the wobble position (U34) of tRNA, leading to the formation of s(2)U34. This chain is tRNA-specific 2-thiouridylase MnmA, found in Corynebacterium efficiens (strain DSM 44549 / YS-314 / AJ 12310 / JCM 11189 / NBRC 100395).